A 486-amino-acid chain; its full sequence is Cardiolipin synthase A (486 aa).

2 helical membrane passes run 3–23 and 38–58; these read TFYT…IAGV and MAWL…YLSL. 2 consecutive PLD phosphodiesterase domains span residues 219 to 246 and 399 to 426; these read MDLR…VDPR and EGGL…DMRS. Catalysis depends on residues H224, K226, D231, H404, K406, and D411.

It belongs to the phospholipase D family. Cardiolipin synthase subfamily. ClsA sub-subfamily.

It localises to the cell inner membrane. It catalyses the reaction 2 a 1,2-diacyl-sn-glycero-3-phospho-(1'-sn-glycerol) = a cardiolipin + glycerol. Catalyzes the reversible phosphatidyl group transfer from one phosphatidylglycerol molecule to another to form cardiolipin (CL) (diphosphatidylglycerol) and glycerol. This chain is Cardiolipin synthase A, found in Erwinia tasmaniensis (strain DSM 17950 / CFBP 7177 / CIP 109463 / NCPPB 4357 / Et1/99).